A 291-amino-acid chain; its full sequence is Succinate--CoA ligase [ADP-forming] subunit alpha 1 (291 aa).

Residues 20–23 (TGFQ), K46, and 99–101 (VTE) each bind CoA. Position 162 (Y162) interacts with substrate. H249 acts as the Tele-phosphohistidine intermediate in catalysis.

This sequence belongs to the succinate/malate CoA ligase alpha subunit family. As to quaternary structure, heterotetramer of two alpha and two beta subunits.

The catalysed reaction is succinate + ATP + CoA = succinyl-CoA + ADP + phosphate. It catalyses the reaction GTP + succinate + CoA = succinyl-CoA + GDP + phosphate. It functions in the pathway carbohydrate metabolism; tricarboxylic acid cycle; succinate from succinyl-CoA (ligase route): step 1/1. Its function is as follows. Succinyl-CoA synthetase functions in the citric acid cycle (TCA), coupling the hydrolysis of succinyl-CoA to the synthesis of either ATP or GTP and thus represents the only step of substrate-level phosphorylation in the TCA. The alpha subunit of the enzyme binds the substrates coenzyme A and phosphate, while succinate binding and nucleotide specificity is provided by the beta subunit. The polypeptide is Succinate--CoA ligase [ADP-forming] subunit alpha 1 (Archaeoglobus fulgidus (strain ATCC 49558 / DSM 4304 / JCM 9628 / NBRC 100126 / VC-16)).